A 770-amino-acid polypeptide reads, in one-letter code: Protein argonaute (770 aa).

The tract at residues 1-151 is N-terminal domain; the sequence is MKAKVVINLV…VIHIIHQIQS (151 aa). Positions 154 to 272 constitute a PAZ domain; it reads TLWELVNKDP…LLPQLVVPTY (119 aa). The interval 276 to 361 is interdomain connector; that stretch reads QLESDVAKEI…SQLLLWTNYS (86 aa). The interval 362–544 is mid domain; the sequence is RKYPVILPYE…LSKLGVKYYV (183 aa). One can recognise a Piwi domain in the interval 473-756; the sequence is GLAFIAARNK…FANAIRNEWK (284 aa). Active-site residues include D558, E596, D628, and H745. D558 contributes to the Mn(2+) binding site. Residues D628, H745, and V770 each contribute to the Mn(2+) site.

The protein belongs to the argonaute family. Long pAgo subfamily. In terms of assembly, monomer. The cofactor is Mn(2+).

Its activity is regulated as follows. Inhibited at greater than 500 mM NaCl. Functionally, a DNA-guided ssDNA endonuclease that may play a role in defense against invading mobile genetic elements. Uses short 5'-phospho-ssDNA sequences as guides (gDNA) to bind complementary target strands, resulting in cleavage of the target DNA (tDNA). Endonucleolytically cleaves DNA in short dsDNA (the gDNA indicates where to cleave on the tDNA). Efficient guide-dependent target DNA cleavage requires a minimal gDNA length of 15 nucleotides (nt) and works up to at least 31 nt. Overexpression decreases plasmid transformation efficiency. Has no appreciable activity with gRNA or on target RNA. Also has guide-independent activity on plasmid DNA called 'chopping'. The cleavage site is 10 nucleotides (nt) downstream of the target residue base-paired with the 5'-end of the gDNA, cleavage is insensitive to adenine methylation. DNA cleavage produces 5'-phosphomonoesters (as it can be ligated by T4 DNA ligase). This chain is Protein argonaute, found in Pyrococcus furiosus (strain ATCC 43587 / DSM 3638 / JCM 8422 / Vc1).